The chain runs to 215 residues: UPF0502 protein YceH (215 aa).

The protein belongs to the UPF0502 family.

In Salmonella paratyphi C (strain RKS4594), this protein is UPF0502 protein YceH.